Here is a 66-residue protein sequence, read N- to C-terminus: Toxin NaTx-4 (66 aa).

One can recognise an LCN-type CS-alpha/beta domain in the interval 1 to 64 (KEGYLVNKET…TFPIPGKTCS (64 aa)). Intrachain disulfides connect Cys-12/Cys-63, Cys-16/Cys-39, Cys-25/Cys-44, and Cys-29/Cys-46.

It belongs to the long (4 C-C) scorpion toxin superfamily. Sodium channel inhibitor family. In terms of tissue distribution, expressed by the venom gland.

The protein resides in the secreted. Probable sodium channel inhibitor. In Centruroides sculpturatus (Arizona bark scorpion), this protein is Toxin NaTx-4.